The chain runs to 615 residues: Membrane protein insertase YidC (615 aa).

5 helical membrane-spanning segments follow: residues 9–29 (LMFIVSAFAILIGYQFFVLGP), 384–404 (LVGNFGLAILLLTVVLKLVLY), 458–478 (LPMLIQIPVFYALYKVLTVTI), 516–536 (LIGAMIAHLGVWPLLYGFTMW), and 556–576 (WFPVIFTFTLSGFAVGLVIYW).

The protein belongs to the OXA1/ALB3/YidC family. Type 1 subfamily. As to quaternary structure, interacts with the Sec translocase complex via SecD. Specifically interacts with transmembrane segments of nascent integral membrane proteins during membrane integration.

The protein localises to the cell inner membrane. Functionally, required for the insertion and/or proper folding and/or complex formation of integral membrane proteins into the membrane. Involved in integration of membrane proteins that insert both dependently and independently of the Sec translocase complex, as well as at least some lipoproteins. Aids folding of multispanning membrane proteins. This is Membrane protein insertase YidC from Caulobacter vibrioides (strain ATCC 19089 / CIP 103742 / CB 15) (Caulobacter crescentus).